The following is a 243-amino-acid chain: 2,3-bisphosphoglycerate-dependent phosphoglycerate mutase (243 aa).

Residues 8–15, 21–22, Arg60, 87–90, Lys98, 114–115, and 183–184 contribute to the substrate site; these read RHGQSEWN, TG, ERHY, RR, and GN. Catalysis depends on His9, which acts as the Tele-phosphohistidine intermediate. Catalysis depends on Glu87, which acts as the Proton donor/acceptor.

Belongs to the phosphoglycerate mutase family. BPG-dependent PGAM subfamily.

The catalysed reaction is (2R)-2-phosphoglycerate = (2R)-3-phosphoglycerate. It functions in the pathway carbohydrate degradation; glycolysis; pyruvate from D-glyceraldehyde 3-phosphate: step 3/5. Catalyzes the interconversion of 2-phosphoglycerate and 3-phosphoglycerate. This chain is 2,3-bisphosphoglycerate-dependent phosphoglycerate mutase, found in Clostridium acetobutylicum (strain ATCC 824 / DSM 792 / JCM 1419 / IAM 19013 / LMG 5710 / NBRC 13948 / NRRL B-527 / VKM B-1787 / 2291 / W).